Consider the following 504-residue polypeptide: Argininosuccinate lyase 2 (504 aa).

The protein belongs to the lyase 1 family. Argininosuccinate lyase subfamily.

It is found in the cytoplasm. It carries out the reaction 2-(N(omega)-L-arginino)succinate = fumarate + L-arginine. It participates in amino-acid biosynthesis; L-arginine biosynthesis; L-arginine from L-ornithine and carbamoyl phosphate: step 3/3. The protein is Argininosuccinate lyase 2 of Agrobacterium fabrum (strain C58 / ATCC 33970) (Agrobacterium tumefaciens (strain C58)).